The primary structure comprises 415 residues: uncharacterized protein (415 aa).

Disordered regions lie at residues 329–351 (KFNK…TESS) and 388–415 (KSMM…IITL). The segment covering 338–348 (LQNESGDDSET) has biased composition (acidic residues). The span at 399–409 (KSNRKSNKRSN) shows a compositional bias: basic residues.

This is an uncharacterized protein from Acanthamoeba polyphaga mimivirus (APMV).